A 290-amino-acid chain; its full sequence is MQGKIIESLAGFYYVESDGQIYQTRARGNFRKKGHKPYVGDEVDFSAKENSEGYILAIHERKNSLVRPPIVNIDQAVVIISAKEPDFNHNLLDRFLILLEHRKISPIIYLSKTDLLEDLDEFKKVQKQYQKIGYYFVYYLEDLTPLLKDKITVFMGQTGVGKTTLLNTLAPDLALETNEISDSLGRGRHTTRAVTLYNIYGGKIADTPGFSSLDYEITSSEELNAAFPELLKLSAACKFRSCTHTHEPGCAVKLALAQRKIWEKRYQTYLQILSEIENRRETYKKVLKRK.

One can recognise a CP-type G domain in the interval 62 to 213; sequence KNSLVRPPIV…IADTPGFSSL (152 aa). GTP-binding positions include 111–114 and 156–164; these read SKTD and GQTGVGKTT. Residues Cys-237, Cys-242, His-244, and Cys-250 each contribute to the Zn(2+) site.

This sequence belongs to the TRAFAC class YlqF/YawG GTPase family. RsgA subfamily. Monomer. Associates with 30S ribosomal subunit, binds 16S rRNA. The cofactor is Zn(2+).

The protein localises to the cytoplasm. One of several proteins that assist in the late maturation steps of the functional core of the 30S ribosomal subunit. Helps release RbfA from mature subunits. May play a role in the assembly of ribosomal proteins into the subunit. Circularly permuted GTPase that catalyzes slow GTP hydrolysis, GTPase activity is stimulated by the 30S ribosomal subunit. The chain is Small ribosomal subunit biogenesis GTPase RsgA from Streptococcus mutans serotype c (strain ATCC 700610 / UA159).